The following is a 189-amino-acid chain: dCTP deaminase (189 aa).

DCTP contacts are provided by residues 112–117 (KSTYAR), 136–138 (TLE), glutamine 157, tyrosine 171, and glutamine 181. Glutamate 138 functions as the Proton donor/acceptor in the catalytic mechanism.

The protein belongs to the dCTP deaminase family. In terms of assembly, homotrimer.

The enzyme catalyses dCTP + H2O + H(+) = dUTP + NH4(+). The protein operates within pyrimidine metabolism; dUMP biosynthesis; dUMP from dCTP (dUTP route): step 1/2. Catalyzes the deamination of dCTP to dUTP. This Acinetobacter baumannii (strain SDF) protein is dCTP deaminase.